Reading from the N-terminus, the 644-residue chain is MAKNLILWLVIAVVLMSVFQSFGPSESNGRKVDYSTFLQEVNNDQVREARINGREINVTKKDSNRYTTYIPVQDPKLLDNLLTKNVKVVGEPPEEPSLLASIFISWFPMLLLIGVWIFFMRQMQGGGGKGAMSFGKSKARMLTEDQIKTTFADVAGCDEAKEEVAELVEYLREPSRFQKLGGKIPKGVLMVGPPGTGKTLLAKAIAGEAKVPFFTISGSDFVEMFVGVGASRVRDMFEQAKKAAPCIIFIDEIDAVGRQRGAGLGGGHDEREQTLNQMLVEMDGFEGNEGIIVIAATNRPDVLDPALLRPGRFDRQVVVGLPDVRGREQILKVHMRRVPLAPDIDAAIIARGTPGFSGADLANLVNEAALFAARGNKRVVSMVEFEKAKDKIMMGAERRSMVMTEAQKESTAYHEAGHAIIGRLVPEHDPVHKVTIIPRGRALGVTFFLPEGDAISASRQKLESQISTLYGGRLAEEIIYGPEHVSTGASNDIKVATNLARNMVTQWGFSEKLGPLLYAEEEGEVFLGRSVAKAKHMSDETARIIDQEVKALIERNYNRARQLLTDNMDILHAMKDALMKYETIDAPQIDDLMARRDVRPPAGWEEPGASNNAGDNGSPKAPRPVDEPRTPNPGNTMSEQLGDK.

At 1–4 (MAKN) the chain is on the cytoplasmic side. A helical transmembrane segment spans residues 5–25 (LILWLVIAVVLMSVFQSFGPS). The Periplasmic segment spans residues 26-98 (ESNGRKVDYS…VGEPPEEPSL (73 aa)). A helical membrane pass occupies residues 99–119 (LASIFISWFPMLLLIGVWIFF). Residues 120–644 (MRQMQGGGGK…NTMSEQLGDK (525 aa)) are Cytoplasmic-facing. Residue 192 to 199 (GPPGTGKT) coordinates ATP. H414 provides a ligand contact to Zn(2+). The active site involves E415. Zn(2+)-binding residues include H418 and D492. A disordered region spans residues 598–644 (VRPPAGWEEPGASNNAGDNGSPKAPRPVDEPRTPNPGNTMSEQLGDK). Residues 632–644 (NPGNTMSEQLGDK) show a composition bias toward polar residues.

It in the central section; belongs to the AAA ATPase family. The protein in the C-terminal section; belongs to the peptidase M41 family. As to quaternary structure, homohexamer. The cofactor is Zn(2+).

The protein localises to the cell inner membrane. In terms of biological role, acts as a processive, ATP-dependent zinc metallopeptidase for both cytoplasmic and membrane proteins. Plays a role in the quality control of integral membrane proteins. The sequence is that of ATP-dependent zinc metalloprotease FtsH from Escherichia coli O157:H7.